Here is a 550-residue protein sequence, read N- to C-terminus: Gamma-aminobutyric acid receptor subunit beta (550 aa).

The signal sequence occupies residues 1–24 (MRRSKTRRIFHVSITLLLVSTIFC). Residues 25-264 (QNGTKPHNNS…FQLRRSVGYF (240 aa)) are Extracellular-facing. Asn26, Asn32, Asn33, Asn45, Asn53, and Asn193 each carry an N-linked (GlcNAc...) asparagine glycan. An intrachain disulfide couples Cys180 to Cys194. Transmembrane regions (helical) follow at residues 265–285 (IFQT…SFWI), 292–311 (ARVA…STGV), and 324–344 (IDIY…EYAA). The Cytoplasmic segment spans residues 345-527 (VNYSYWGRER…DVNLIDKYSR (183 aa)). The tract at residues 405–465 (AMSTSNTAAQ…TTSLKGARPH (61 aa)) is disordered. Residues 406 to 421 (MSTSNTAAQNNNFEST) show a composition bias toward polar residues. The helical transmembrane segment at 528-548 (VVFPVCFIVFNLFYWSYYMMV) threads the bilayer.

This sequence belongs to the ligand-gated ion channel (TC 1.A.9) family. Gamma-aminobutyric acid receptor (TC 1.A.9.5) subfamily.

Its subcellular location is the postsynaptic cell membrane. The protein resides in the cell membrane. Functionally, GABA, an inhibitory neurotransmitter, mediates neuronal inhibition by binding to the GABA receptor and opening an integral chloride channel. This is Gamma-aminobutyric acid receptor subunit beta (gab-1) from Caenorhabditis elegans.